We begin with the raw amino-acid sequence, 302 residues long: Acetaldehyde dehydrogenase 1 (302 aa).

Residue 12 to 15 (SGNI) participates in NAD(+) binding. Cysteine 127 (acyl-thioester intermediate) is an active-site residue. NAD(+) contacts are provided by residues 158–166 (SAGPGTRAN) and asparagine 277.

Belongs to the acetaldehyde dehydrogenase family.

It catalyses the reaction acetaldehyde + NAD(+) + CoA = acetyl-CoA + NADH + H(+). The sequence is that of Acetaldehyde dehydrogenase 1 from Mycobacteroides abscessus (strain ATCC 19977 / DSM 44196 / CCUG 20993 / CIP 104536 / JCM 13569 / NCTC 13031 / TMC 1543 / L948) (Mycobacterium abscessus).